Here is a 599-residue protein sequence, read N- to C-terminus: Sulfite reductase [NADPH] flavoprotein alpha-component (599 aa).

Residues 64 to 202 (ITIISASQTG…AASEWRARVV (139 aa)) form the Flavodoxin-like domain. Residues 70-75 (SQTGNA), 117-120 (STQG), and 153-162 (LGDSSYEFFC) contribute to the FMN site. The region spanning 234–448 (DAPLVASLSV…IEHNDNFRLP (215 aa)) is the FAD-binding FR-type domain. Residues T322, A356, 386 to 389 (RLYS), 404 to 406 (TVG), Y410, and 419 to 422 (GGAS) contribute to the FAD site. NADP(+) contacts are provided by residues 519–520 (SR), 525–529 (KVYVQ), and D561. Residue Y599 participates in FAD binding.

This sequence belongs to the NADPH-dependent sulphite reductase flavoprotein subunit CysJ family. In the N-terminal section; belongs to the flavodoxin family. It in the C-terminal section; belongs to the flavoprotein pyridine nucleotide cytochrome reductase family. Alpha(8)-beta(8). The alpha component is a flavoprotein, the beta component is a hemoprotein. Requires FAD as cofactor. FMN serves as cofactor.

It carries out the reaction hydrogen sulfide + 3 NADP(+) + 3 H2O = sulfite + 3 NADPH + 4 H(+). The protein operates within sulfur metabolism; hydrogen sulfide biosynthesis; hydrogen sulfide from sulfite (NADPH route): step 1/1. Component of the sulfite reductase complex that catalyzes the 6-electron reduction of sulfite to sulfide. This is one of several activities required for the biosynthesis of L-cysteine from sulfate. The flavoprotein component catalyzes the electron flow from NADPH -&gt; FAD -&gt; FMN to the hemoprotein component. This is Sulfite reductase [NADPH] flavoprotein alpha-component from Shigella boydii serotype 4 (strain Sb227).